A 414-amino-acid polypeptide reads, in one-letter code: uncharacterized protein (414 aa).

It belongs to the UbiH/COQ6 family. It depends on FAD as a cofactor.

This is an uncharacterized protein from Synechocystis sp. (strain ATCC 27184 / PCC 6803 / Kazusa).